The following is a 486-amino-acid chain: MTQFINGQWVAGLGHEVTSKNPANSEVIWSSKTATAEQVNTAVEAAREVQFDWFMLGFEGRLAIVEAYKTQLEEHKAEMAEVIAQETGKPQWETATEAGAMIGKIGLSVAAYNKRTGSSENDTPAGRAVLRHKPHGVVAVFGPYNFPGHLPNGHIVPALLAGNTVVFKPSELTPKVAELMLKLWEKAGLPAGVINLVQGEVETGKALASHEQIDGLFFTGSSRTGHILHQQYAGEPGKILALEMGGNNPLIIKGVKDTKAAVHDIIQSAYISSGQRCTCARRLYVEKGAEGDALLAELADAVKRIQVGAWNSQPQPFMGSMISETAAKGMVESQRNLLNLGGSSLVELTHLKEGTGLVSPGLIDVTQVIELPDEEYFGPLLQVVRYTDFDEAIKLANKTRYGLSAGILADSRDDYEYFLARIRAGIVNWNKQITGASGAAPFGGVGASGNHRASAFYAADYCAYPVASVEADAVSLPASLSPGLSI.

An NAD(+)-binding site is contributed by 220-225 (GSSRTG). Residues glutamate 243 and cysteine 277 contribute to the active site.

It belongs to the aldehyde dehydrogenase family. AstD subfamily.

It carries out the reaction N-succinyl-L-glutamate 5-semialdehyde + NAD(+) + H2O = N-succinyl-L-glutamate + NADH + 2 H(+). The protein operates within amino-acid degradation; L-arginine degradation via AST pathway; L-glutamate and succinate from L-arginine: step 4/5. In terms of biological role, catalyzes the NAD-dependent reduction of succinylglutamate semialdehyde into succinylglutamate. The polypeptide is N-succinylglutamate 5-semialdehyde dehydrogenase (Shewanella woodyi (strain ATCC 51908 / MS32)).